Consider the following 288-residue polypeptide: Protein-S-isoprenylcysteine O-methyltransferase (288 aa).

Residues 13–29 (SIVSFTLGASVISLPLL) form a helical membrane-spanning segment. Over 30-45 (TSSFTEQTLLAAAPGR) the chain is Lumenal. A helical transmembrane segment spans residues 46 to 63 (IALVFFIAALNGLLLLLY). Residues 64–73 (KAQLYQVAIR) lie on the Cytoplasmic side of the membrane. The chain crosses the membrane as a helical span at residues 74–91 (ASFLGFAFGCGLLLSITQ). Topologically, residues 92 to 96 (SPWKP) are lumenal. A helical membrane pass occupies residues 97–116 (FGWYVCSLSFFHYSEYLVTA). Residues 117–135 (MNNPRSLSIDSFLLNHSLE) lie on the Cytoplasmic side of the membrane. A helical membrane pass occupies residues 136–153 (YTLAALSSWVEFTIETTI). At 154–158 (YPDLK) the chain is on the lumenal side. Residues 159 to 178 (QITWLSVIGLIMVLFGEVLR) form a helical membrane-spanning segment. Residues 179-216 (KCAMLTAGSNFNHIVQNEKSDSHTLVTSGVYSWFRHPS) are Cytoplasmic-facing. S-adenosyl-L-methionine contacts are provided by residues Gln194, 201-204 (HTLV), Tyr209, and 214-217 (HPSY). Residues 217 to 232 (YVGWFYWSIGTQVLLC) form a helical membrane-spanning segment. Asn233 is a topological domain (lumenal). The chain crosses the membrane as a helical span at residues 234 to 248 (PLCLVGYTLASWRFF). The Cytoplasmic segment spans residues 249-288 (SERIEEEEFSLIHFFGENYLEYKKKVPTGLPFIKGVKMEP). Substrate is bound at residue Arg251. Glu255 provides a ligand contact to S-adenosyl-L-methionine.

Belongs to the class VI-like SAM-binding methyltransferase superfamily. Isoprenylcysteine carboxyl methyltransferase family.

The protein resides in the endoplasmic reticulum membrane. It carries out the reaction [protein]-C-terminal S-[(2E,6E)-farnesyl]-L-cysteine + S-adenosyl-L-methionine = [protein]-C-terminal S-[(2E,6E)-farnesyl]-L-cysteine methyl ester + S-adenosyl-L-homocysteine. In terms of biological role, catalyzes the post-translational methylation of isoprenylated C-terminal cysteine residues. This Xenopus laevis (African clawed frog) protein is Protein-S-isoprenylcysteine O-methyltransferase (icmt).